Here is a 519-residue protein sequence, read N- to C-terminus: Glutamate--cysteine ligase (519 aa).

This sequence belongs to the glutamate--cysteine ligase type 1 family. Type 1 subfamily.

The catalysed reaction is L-cysteine + L-glutamate + ATP = gamma-L-glutamyl-L-cysteine + ADP + phosphate + H(+). The protein operates within sulfur metabolism; glutathione biosynthesis; glutathione from L-cysteine and L-glutamate: step 1/2. The chain is Glutamate--cysteine ligase from Edwardsiella ictaluri (strain 93-146).